Consider the following 299-residue polypeptide: ATP phosphoribosyltransferase (299 aa).

The protein belongs to the ATP phosphoribosyltransferase family. Long subfamily. Equilibrium between an active dimeric form, an inactive hexameric form and higher aggregates. Interconversion between the various forms is largely reversible and is influenced by the natural substrates and inhibitors of the enzyme. It depends on Mg(2+) as a cofactor.

Its subcellular location is the cytoplasm. It carries out the reaction 1-(5-phospho-beta-D-ribosyl)-ATP + diphosphate = 5-phospho-alpha-D-ribose 1-diphosphate + ATP. It participates in amino-acid biosynthesis; L-histidine biosynthesis; L-histidine from 5-phospho-alpha-D-ribose 1-diphosphate: step 1/9. With respect to regulation, feedback inhibited by histidine. In terms of biological role, catalyzes the condensation of ATP and 5-phosphoribose 1-diphosphate to form N'-(5'-phosphoribosyl)-ATP (PR-ATP). Has a crucial role in the pathway because the rate of histidine biosynthesis seems to be controlled primarily by regulation of HisG enzymatic activity. In Serratia proteamaculans (strain 568), this protein is ATP phosphoribosyltransferase.